The following is a 691-amino-acid chain: MARAFPLERVRNIGIAAHIDAGKTTCTERILFYSGVVHKMGEVHDGAAVTDWMAQERERGITITAAAISTTWDDHRINIIDTPGHVDFTIEVERSMRVLDGVIAVFCAVGGVQPQSETVWRQADRYSVPRMVFVNKMDRTGADFLKVHGQIKDRLKANAVPIQLPIGAENDLKGIIDLVENKAYIYKDDLGKDIEQTEVPSDMVDLVSDWRLKLMESIAETEEELLEAFLENGELTIEQLKSGIREGVLKHGLVPMLCGSAFKNKGVQLLLDAVVNYLPAPVDVPPIQGLLPNGKEAVRPSDDGAPFSALAFKVMADPYGKLTFVRMYSGVLEKGSYVLNSTKDAKERISRLIILKADDREEVDELRAGDLGAVLGLKNTTTGDTLCASEEAIVLETLYIPEPVISVAVEPKTKSDMEKLGKALTSLSEEDPTFRVSTDQETNQTVIAGMGELHLEILVDRMLREFKVEANIGAPQVSYRETIRASSSGEGKFARQTGGKGQYGHVVIEVEPGEPGTGFEFVNKIVGGSVPKEYIKPAESGMRETCESGVIAGYPLIDVKVTLVDGSYHDVDSSEMAFKIAGSMAFKDGIKKCNPVLLEPMMKVEVEVPEDFLGSIIGDLSSRRGQVEGQSIEDGQSKVQSKVPLAEMFGYATQLRSMTQGRGIFSMEFSTYEEVPRNVAEAIISKNQGNS.

A tr-type G domain is found at 8–282 (ERVRNIGIAA…AVVNYLPAPV (275 aa)). GTP contacts are provided by residues 17 to 24 (AHIDAGKT), 81 to 85 (DTPGH), and 135 to 138 (NKMD).

The protein belongs to the TRAFAC class translation factor GTPase superfamily. Classic translation factor GTPase family. EF-G/EF-2 subfamily.

The protein localises to the cytoplasm. Functionally, catalyzes the GTP-dependent ribosomal translocation step during translation elongation. During this step, the ribosome changes from the pre-translocational (PRE) to the post-translocational (POST) state as the newly formed A-site-bound peptidyl-tRNA and P-site-bound deacylated tRNA move to the P and E sites, respectively. Catalyzes the coordinated movement of the two tRNA molecules, the mRNA and conformational changes in the ribosome. This chain is Elongation factor G, found in Prochlorococcus marinus (strain NATL1A).